The chain runs to 316 residues: Ribosomal RNA small subunit methyltransferase H (316 aa).

Residues 37-39, D56, F83, D106, and H113 contribute to the S-adenosyl-L-methionine site; that span reads GGH. The segment at 276 to 316 is disordered; the sequence is PILPSEEETKENPASRSAKLRVLRKTKSADKKYKKENSKEE. Over residues 302 to 316 the composition is skewed to basic and acidic residues; sequence KSADKKYKKENSKEE.

This sequence belongs to the methyltransferase superfamily. RsmH family.

Its subcellular location is the cytoplasm. The catalysed reaction is cytidine(1402) in 16S rRNA + S-adenosyl-L-methionine = N(4)-methylcytidine(1402) in 16S rRNA + S-adenosyl-L-homocysteine + H(+). Functionally, specifically methylates the N4 position of cytidine in position 1402 (C1402) of 16S rRNA. This Leptospira borgpetersenii serovar Hardjo-bovis (strain JB197) protein is Ribosomal RNA small subunit methyltransferase H.